Reading from the N-terminus, the 145-residue chain is NADH-quinone oxidoreductase subunit A 1 (145 aa).

3 helical membrane-spanning segments follow: residues 18 to 38 (ILPL…LLLA), 71 to 91 (VPFY…VFIF), and 104 to 124 (GLIH…WLWL).

It belongs to the complex I subunit 3 family. As to quaternary structure, NDH-1 is composed of 14 different subunits. Subunits NuoA, H, J, K, L, M, N constitute the membrane sector of the complex.

It localises to the cell inner membrane. It catalyses the reaction a quinone + NADH + 5 H(+)(in) = a quinol + NAD(+) + 4 H(+)(out). Functionally, NDH-1 shuttles electrons from NADH, via FMN and iron-sulfur (Fe-S) centers, to quinones in the respiratory chain. The immediate electron acceptor for the enzyme in this species is believed to be ubiquinone. Couples the redox reaction to proton translocation (for every two electrons transferred, four hydrogen ions are translocated across the cytoplasmic membrane), and thus conserves the redox energy in a proton gradient. The sequence is that of NADH-quinone oxidoreductase subunit A 1 from Geotalea uraniireducens (strain Rf4) (Geobacter uraniireducens).